The following is a 226-amino-acid chain: Thiocyanate methyltransferase 1 (226 aa).

Residues W35, W39, W46, and G73 each contribute to the S-adenosyl-L-methionine site. S85 carries the phosphoserine modification. S-adenosyl-L-methionine contacts are provided by residues D94, 122–123, and Y138; that span reads DF.

The protein belongs to the class I-like SAM-binding methyltransferase superfamily. TPMT family. As to expression, ubiquitous.

It carries out the reaction thiocyanate + S-adenosyl-L-methionine = methyl thiocyanate + S-adenosyl-L-homocysteine. S-adenosyl-L-methionine-dependent methyltransferase. Probably involved in glucosinolate metabolism and defense against phytopathogens. Highly reactive to thiocyanate (NCS(-)) derived from myrosinase-mediated hydrolysis of glucosinolates upon tissue damage. Also accepts halid ions as substrates with a lower affinity. In Brassica oleracea (Wild cabbage), this protein is Thiocyanate methyltransferase 1 (TMT1).